The primary structure comprises 622 residues: Pesticidal crystal protein Cry2Ac (622 aa).

It belongs to the delta endotoxin family.

In terms of biological role, promotes colloidosmotic lysis by binding to the midgut epithelial cells of lepidopteran larvae. Has low activity on dipteran larvae. The polypeptide is Pesticidal crystal protein Cry2Ac (cry2Ac) (Bacillus thuringiensis).